We begin with the raw amino-acid sequence, 966 residues long: Polycystin-2 (966 aa).

Residues 1–106 are disordered; that stretch reads MVNSRRVQPQ…DDDEVEGEEG (106 aa). The Cytoplasmic segment spans residues 1–217; sequence MVNSRRVQPQ…NANREKYLKS (217 aa). Residues 30-44 are compositionally biased toward gly residues; sequence VAGGAGLAVPGGLGE. A compositionally biased stretch (basic and acidic residues) spans 46-56; that stretch reads RGLEIEMERIR. Positions 58–79 are enriched in low complexity; sequence AAARDPPAGASASPSPPLSSCS. Phosphoserine occurs at positions 72 and 76. Positions 91-105 are enriched in acidic residues; sequence EAEEDDDDDEVEGEE. Arginine 135 is subject to Omega-N-methylarginine. The tract at residues 147–179 is disordered; that stretch reads HLSGRRRRLEDQGAQCPSPAGGGDPLHRHLPLE. Residues 218–239 form a helical membrane-spanning segment; it reads VLRELVTYLFFLVVLCILTYGM. Over 240-466 the chain is Extracellular; that stretch reads MSSNVYYYTR…PVKLIRYVTA (227 aa). Residues asparagine 297, asparagine 303, and asparagine 326 are each glycosylated (N-linked (GlcNAc...) asparagine). An intrachain disulfide couples cysteine 329 to cysteine 342. Asparagine 360 and asparagine 373 each carry an N-linked (GlcNAc...) asparagine glycan. The helical transmembrane segment at 467–487 threads the bilayer; it reads FDFFLAACEIIFCFFIIYYVV. Over 488 to 503 the chain is Cytoplasmic; it reads EEILEIRIHRLSYFRS. A helical transmembrane segment spans residues 504–524; the sequence is FWNCLDVVIVVLSVVAMVINI. Topologically, residues 525–550 are extracellular; it reads YRMSNAEGLLQFLEDQNSFPNFEHVA. The chain crosses the membrane as a helical span at residues 551–571; sequence YWQIQFNNISAVMVFLVWIKL. Position 555 (glutamine 555) interacts with cholesterol. At 572–595 the chain is on the cytoplasmic side; sequence FKFINFNRTMSQLSTTMSRCAKDL. Residues 596-617 traverse the membrane as a helical segment; it reads FGFTIMFSIIFLAYAQLAYLVF. At 618-629 the chain is on the extracellular side; sequence GTQVDDFSTFQE. Residues 630 to 644 constitute an intramembrane region (pore-forming); it reads CIFTQFRIILGDINF. Leucine 639 serves as a coordination point for Ca(2+). Residues 639–641 carry the Selectivity filter motif; it reads LGD. Residues 645–652 are Extracellular-facing; that stretch reads AEIEEANR. The chain crosses the membrane as a helical span at residues 653 to 673; sequence VLGPLYFTTFVFFMFFILLNM. Over 674–966 the chain is Cytoplasmic; the sequence is FLAIINDSYS…GGNGSANVHA (293 aa). One can recognise an EF-hand domain in the interval 748–783; that stretch reads HTDAEIEAIFTKYDQDGDQELTEREHQQMRDDLEKE. The Ca(2+) site is built by aspartate 761, aspartate 763, aspartate 765, glutamate 767, and glutamate 772. Residues 764–828 form a disordered region; that stretch reads GDQELTEREH…GHSSRRRGSI (65 aa). Over residues 768 to 793 the composition is skewed to basic and acidic residues; the sequence is LTEREHQQMRDDLEKEREDLDLEHSS. The span at 794–805 shows a compositional bias: low complexity; it reads LPRPMSSRSFPR. Phosphoserine is present on residues serine 799, serine 806, serine 810, and serine 827. The tract at residues 801 to 820 is linker; that stretch reads RSFPRSLDDSEEEDDEDSGH. Positions 808–819 are important for interaction with PACS1 and PACS2; the sequence is DDSEEEDDEDSG. Residues 831–870 adopt a coiled-coil conformation; that stretch reads GVSYEEFQVLVRRVDRMEHSIGSIVSKIDAVIVKLEIMER. The tract at residues 914 to 966 is disordered; the sequence is WESDDAASQTGHGVSTQVGLGGQPHPRNPRPPSSQSAEGLEGGGGNGSANVHA. Over residues 919–931 the composition is skewed to polar residues; sequence AASQTGHGVSTQV.

This sequence belongs to the polycystin family. Homotetramer. Component of the heterotetrameric polycystin channel complex with PKD1; the tetramer contains one PKD1 chain and three PKD2 chains. Interaction with PKD1 is required for ciliary localization. Isoform 1 interacts with PKD1 while isoform 3 does not. Interacts with PKD1L1. Interacts with CD2AP. Interacts with HAX1. Interacts with NEK8. Part of a complex containing AKAP5, ADCY5, ADCY6 and PDE4C. Interacts (via C-terminus) with TRPV4 (via C-terminus). Interacts (via C-terminal acidic region) with PACS1 and PACS2; these interactions retain the protein in the endoplasmic reticulum and prevent trafficking to the cell membrane. Interacts with TMEM33; enhancing its opening at the ER membrane. Interacts with TMEM120A; TMEM120A inhibits PKD2 channel activity through the physical association of PKD2 with TMEM120A. Interacts (via N-terminus) with RYR2; regulates RYR2 channel activity. N-glycosylated. The four subunits in a tetramer probably differ in the extent of glycosylation; simultaneous glycosylation of all experimentally validated sites would probably create steric hindrance. In terms of processing, sumoylated by SUMO1; sumoylation regulates PKD2 membrane recycling and is necessary for intravascular pressure-induced arterial contractility. Post-translationally, phosphorylated. Phosphorylation is important for protein function; a mutant that lacks the N-terminal phosphorylation sites cannot complement a zebrafish pkd2-deficient mutant. PKD-mediated phosphorylation at the C-terminus regulates its function in the release of Ca(2+) stores from the endoplasmic reticulum. Phosphorylation at Ser-810 regulates PKD2 trafficking. Phosphorylation at Ser-72 is required for PKD2 trafficking to or retention at the lateral plasma membrane. Phosphorylation at Ser-799, Ser-810 and Ser-827 regulates PKD2 channel activity. Detected in kidney epithelium (at protein level). Highly expressed on basolateral membranes in distal convoluted tubules and medullary thick ascending limbs of Henle. Detected at much lower levels in cortical and medullary collecting tubules, and not detected in the glomerular tuft, in thin limbs of Henle, interstitium and blood vessels (at protein level). Expressed in mesenchymally derived structures in the developing embryo at day 12.5. Isoform 1 is predominantly expressed in kidney at all developmental stages with high levels also detected in lung. Isoform 3 shows highest expression in brain with lower expression in kidney and lung, low levels in thymus and is hardly detectable in liver.

Its subcellular location is the cell projection. The protein resides in the cilium membrane. It is found in the cell membrane. The protein localises to the basolateral cell membrane. It localises to the cytoplasmic vesicle membrane. Its subcellular location is the endoplasmic reticulum membrane. The protein resides in the golgi apparatus. It is found in the vesicle. The protein localises to the secreted. It localises to the extracellular exosome. The enzyme catalyses K(+)(in) = K(+)(out). It catalyses the reaction Na(+)(in) = Na(+)(out). It carries out the reaction Ca(2+)(in) = Ca(2+)(out). With respect to regulation, channel activity is regulated by phosphorylation. The channel is activated by increased cytoplasmic Ca(2+) (in the uM range) and by membrane depolarization. TMEM120A inhibits the channel activity of PKD2, and mediates mechanosensitivity of the PKD2-TMEM120A channel complex. At the endoplasmic reticulum membrane (ER), TMEM33 enhances its channel activity. PKD1/ PKD2 complex on the plasma membrane is activated by PKD1 N-terminus. Its function is as follows. Forms a nonselective cation channel. Can function as a homotetrameric ion channel or can form heteromer with PKD1. Displays distinct function depending on its subcellular localization and regulation by its binding partners. Functions as a cation channel, with a preference for monovalent cations over divalent cations that allows K(+), Na(+) and Ca(2+) influx, with low selectivity for Ca(2+). Involved in fluid-flow mechanosensation by the primary cilium in renal epithelium. In the endoplasmic reticulum, likely functions as a K(+) channel to facilitate Ca(2+) release. The heterotetrameric PKD1/PKD2 channel has higher Ca(2+) permeability than homomeric PKD2 channel and acts as a primarily Ca(2+)-permeable channel. PKD1 and PKD2 may function through a common signaling pathway that is necessary to maintain the normal, differentiated state of renal tubule cells. Interacts with and acts as a regulator of a number of other channels, such as TRPV4, TRPC1, IP3R, RYR2, ultimately further affecting intracellular signaling, to modulate intracellular Ca(2+) signaling. Together with TRPV4, forms mechano- and thermosensitive channels in cilium. In cardiomyocytes, PKD2 modulates Ca(2+) release from stimulated RYR2 receptors through direct association. Also involved in left-right axis specification via its role in sensing nodal flow; forms a complex with PKD1L1 in cilia to facilitate flow detection in left-right patterning. Acts as a regulator of cilium length together with PKD1. Mediates systemic blood pressure and contributes to the myogenic response in cerebral arteries though vasoconstriction. This Mus musculus (Mouse) protein is Polycystin-2.